The sequence spans 593 residues: A-type ATP synthase subunit A (593 aa).

Position 236-243 (236-243) interacts with ATP; it reads GPFGSGKT.

This sequence belongs to the ATPase alpha/beta chains family. As to quaternary structure, has multiple subunits with at least A(3), B(3), C, D, E, F, H, I and proteolipid K(x).

The protein localises to the cell membrane. The enzyme catalyses ATP + H2O + 4 H(+)(in) = ADP + phosphate + 5 H(+)(out). Its function is as follows. Component of the A-type ATP synthase that produces ATP from ADP in the presence of a proton gradient across the membrane. The A chain is the catalytic subunit. The polypeptide is A-type ATP synthase subunit A (Pyrobaculum arsenaticum (strain DSM 13514 / JCM 11321 / PZ6)).